Consider the following 336-residue polypeptide: Glycerol-3-phosphate dehydrogenase [NAD(P)+] (336 aa).

NADPH is bound by residues serine 11, tryptophan 12, and lysine 106. 3 residues coordinate sn-glycerol 3-phosphate: lysine 106, glycine 134, and serine 136. Alanine 138 is an NADPH binding site. Positions 189, 242, 252, 253, and 254 each coordinate sn-glycerol 3-phosphate. Catalysis depends on lysine 189, which acts as the Proton acceptor. An NADPH-binding site is contributed by arginine 253. Residues valine 277 and glutamate 279 each contribute to the NADPH site.

It belongs to the NAD-dependent glycerol-3-phosphate dehydrogenase family.

Its subcellular location is the cytoplasm. It carries out the reaction sn-glycerol 3-phosphate + NAD(+) = dihydroxyacetone phosphate + NADH + H(+). It catalyses the reaction sn-glycerol 3-phosphate + NADP(+) = dihydroxyacetone phosphate + NADPH + H(+). It participates in membrane lipid metabolism; glycerophospholipid metabolism. In terms of biological role, catalyzes the reduction of the glycolytic intermediate dihydroxyacetone phosphate (DHAP) to sn-glycerol 3-phosphate (G3P), the key precursor for phospholipid synthesis. This is Glycerol-3-phosphate dehydrogenase [NAD(P)+] from Agathobacter rectalis (strain ATCC 33656 / DSM 3377 / JCM 17463 / KCTC 5835 / VPI 0990) (Eubacterium rectale).